The sequence spans 239 residues: Pyridoxine 5'-phosphate synthase (239 aa).

Asn-7 contributes to the 3-amino-2-oxopropyl phosphate binding site. 9–10 (DH) lines the 1-deoxy-D-xylulose 5-phosphate pocket. Arg-18 contributes to the 3-amino-2-oxopropyl phosphate binding site. The Proton acceptor role is filled by His-43. 1-deoxy-D-xylulose 5-phosphate is bound by residues Arg-45 and His-50. The active-site Proton acceptor is Glu-70. Thr-100 is a binding site for 1-deoxy-D-xylulose 5-phosphate. Residue His-192 is the Proton donor of the active site. 3-amino-2-oxopropyl phosphate contacts are provided by residues Gly-193 and 214–215 (GH).

The protein belongs to the PNP synthase family. As to quaternary structure, homooctamer; tetramer of dimers.

It localises to the cytoplasm. The catalysed reaction is 3-amino-2-oxopropyl phosphate + 1-deoxy-D-xylulose 5-phosphate = pyridoxine 5'-phosphate + phosphate + 2 H2O + H(+). It functions in the pathway cofactor biosynthesis; pyridoxine 5'-phosphate biosynthesis; pyridoxine 5'-phosphate from D-erythrose 4-phosphate: step 5/5. Functionally, catalyzes the complicated ring closure reaction between the two acyclic compounds 1-deoxy-D-xylulose-5-phosphate (DXP) and 3-amino-2-oxopropyl phosphate (1-amino-acetone-3-phosphate or AAP) to form pyridoxine 5'-phosphate (PNP) and inorganic phosphate. This chain is Pyridoxine 5'-phosphate synthase, found in Pelagibacter ubique (strain HTCC1062).